The following is a 748-amino-acid chain: Rho GTPase-activating protein 24 (748 aa).

The PH domain occupies asparagine 18–tryptophan 124. A Rho-GAP domain is found at glutamine 134–phenylalanine 328. Residues phenylalanine 328–serine 476 are disordered. Composition is skewed to polar residues over residues glutamine 335–asparagine 347 and glycine 356–glutamate 368. Residues serine 369, serine 391, serine 396, serine 398, serine 402, serine 413, serine 415, and serine 437 each carry the phosphoserine modification. The span at serine 369–serine 381 shows a compositional bias: basic and acidic residues. Polar residues predominate over residues proline 382–asparagine 405. Residues isoleucine 432–serine 476 are compositionally biased toward polar residues. Position 452 is a phosphothreonine (threonine 452). Serine 495 carries the post-translational modification Phosphoserine. The disordered stretch occupies residues aspartate 582–asparagine 640. Over residues aspartate 600–serine 615 the composition is skewed to basic and acidic residues. Residues glycine 617–serine 630 show a composition bias toward low complexity. The span at glutamate 631–asparagine 640 shows a compositional bias: polar residues. Residues serine 649–phenylalanine 729 adopt a coiled-coil conformation.

As to quaternary structure, interacts with FLNA. Phosphorylated by ROCK, leading to activate the RacGAP activity.

The protein resides in the cytoplasm. Its subcellular location is the cytoskeleton. It is found in the cell junction. It localises to the adherens junction. The protein localises to the focal adhesion. The protein resides in the cell projection. In terms of biological role, rho GTPase-activating protein involved in cell polarity, cell morphology and cytoskeletal organization. Acts as a GTPase activator for the Rac-type GTPase by converting it to an inactive GDP-bound state. Controls actin remodeling by inactivating Rac downstream of Rho leading to suppress leading edge protrusion and promotes cell retraction to achieve cellular polarity. Able to suppress RAC1 and CDC42 activity in vitro. Overexpression induces cell rounding with partial or complete disruption of actin stress fibers and formation of membrane ruffles, lamellipodia, and filopodia. Isoform 2 is a vascular cell-specific GAP involved in modulation of angiogenesis. In Rattus norvegicus (Rat), this protein is Rho GTPase-activating protein 24 (Arhgap24).